Consider the following 637-residue polypeptide: Transcription termination factor FttA (637 aa).

The KHa stretch occupies residues 4–71 (EDVLLDLKHK…IAMRPDPRVL (68 aa)). Residues 72–139 (ATPEDSISII…WIPKVVRTPP (68 aa)) are KHb. Residues 180–383 (WVRVTALGGC…VISEATYGNA (204 aa)) form a metallo-beta-lactamase N-terminus region. Residues H242, H244, D246, H247, H329, and D352 each contribute to the Zn(2+) site. Residues 384–578 (NAFQPALKDA…MEVQVVDGFS (195 aa)) are beta-Casp. The segment at 579–637 (GHSDRRQLMEYVKRMQPRPERVFTEHGDEKACVDLASSVYKKLKIETRALTNLETVRLL) is metallo-beta-lactamase C-terminus. H604 lines the Zn(2+) pocket.

Belongs to the metallo-beta-lactamase superfamily. RNA-metabolizing metallo-beta-lactamase-like family. FttA subfamily. In terms of assembly, homodimer. Interacts with RNA polymerase (RNAP), interacts with the Spt4-Spt5 complex. Requires Zn(2+) as cofactor.

Its function is as follows. Terminates transcription on the whole genome. Termination is linked to FttA-mediated RNA cleavage and does not require NTP hydrolysis. Cleaves endonucleolytically at the RNA exit channel of RNA polymerase (RNAP); the 5'-3' exonuclease activity of this protein degrades the nascent RNA released from RNAP. The protein is Transcription termination factor FttA of Methanosarcina mazei (strain ATCC BAA-159 / DSM 3647 / Goe1 / Go1 / JCM 11833 / OCM 88) (Methanosarcina frisia).